We begin with the raw amino-acid sequence, 268 residues long: Lectin ESA-2 (268 aa).

Repeat copies occupy residues 1-67 (GRYT…RRGE), 68-135 (SNVY…QSGG), 136-202 (DTYN…LSGA), and 203-268 (NNYS…VATS). The interval 1-268 (GRYTVQNQWG…PIGFKGVATS (268 aa)) is 4 X approximate tandem repeats.

Monomer.

Functionally, lectin specific for high mannose N-glycans, recognizes the branched moiety of these glycans. Does not recognize other types of N-glycans or monosaccharides. Agglutinates trypsin-treated sheep and rabbit erythrocytes and untreated sheep erythrocytes. Has mitogenic activity on mouse lymphocytes. Does not require metal ions for activity. This chain is Lectin ESA-2, found in Eucheuma serra (Marine red alga).